Reading from the N-terminus, the 417-residue chain is NADH-quinone oxidoreductase subunit D (417 aa).

The protein belongs to the complex I 49 kDa subunit family. NDH-1 is composed of 14 different subunits. Subunits NuoB, C, D, E, F, and G constitute the peripheral sector of the complex.

It is found in the cell inner membrane. It catalyses the reaction a quinone + NADH + 5 H(+)(in) = a quinol + NAD(+) + 4 H(+)(out). NDH-1 shuttles electrons from NADH, via FMN and iron-sulfur (Fe-S) centers, to quinones in the respiratory chain. The immediate electron acceptor for the enzyme in this species is believed to be ubiquinone. Couples the redox reaction to proton translocation (for every two electrons transferred, four hydrogen ions are translocated across the cytoplasmic membrane), and thus conserves the redox energy in a proton gradient. The polypeptide is NADH-quinone oxidoreductase subunit D (Alkalilimnicola ehrlichii (strain ATCC BAA-1101 / DSM 17681 / MLHE-1)).